We begin with the raw amino-acid sequence, 464 residues long: Argininosuccinate lyase (464 aa).

The protein belongs to the lyase 1 family. Argininosuccinate lyase subfamily.

Its subcellular location is the cytoplasm. It catalyses the reaction 2-(N(omega)-L-arginino)succinate = fumarate + L-arginine. Its pathway is amino-acid biosynthesis; L-arginine biosynthesis; L-arginine from L-ornithine and carbamoyl phosphate: step 3/3. The protein is Argininosuccinate lyase of Pseudomonas fluorescens (strain ATCC BAA-477 / NRRL B-23932 / Pf-5).